A 77-amino-acid polypeptide reads, in one-letter code: RNA-binding protein Hfq (77 aa).

The Sm domain maps to 9 to 68; sequence DPFLNALRKEHIPVAIYLVNGIKLQGQIESFDQFVILLKNTVSQMVYKHAISTVVPARAI.

This sequence belongs to the Hfq family. As to quaternary structure, homohexamer.

Its function is as follows. RNA chaperone that binds small regulatory RNA (sRNAs) and mRNAs to facilitate mRNA translational regulation in response to envelope stress, environmental stress and changes in metabolite concentrations. Also binds with high specificity to tRNAs. In Psychromonas ingrahamii (strain DSM 17664 / CCUG 51855 / 37), this protein is RNA-binding protein Hfq.